The following is a 668-amino-acid chain: DNA ligase (668 aa).

NAD(+) is bound by residues 34-38, 83-84, and Glu114; these read DTEYD and SL. Lys116 serves as the catalytic N6-AMP-lysine intermediate. The NAD(+) site is built by Arg137, Glu171, Lys286, and Lys310. Zn(2+) contacts are provided by Cys404, Cys407, Cys422, and Cys427. In terms of domain architecture, BRCT spans 588–668; that stretch reads NSDSIIANKS…FFDLLKSEKG (81 aa).

The protein belongs to the NAD-dependent DNA ligase family. LigA subfamily. It depends on Mg(2+) as a cofactor. Requires Mn(2+) as cofactor.

It carries out the reaction NAD(+) + (deoxyribonucleotide)n-3'-hydroxyl + 5'-phospho-(deoxyribonucleotide)m = (deoxyribonucleotide)n+m + AMP + beta-nicotinamide D-nucleotide.. Its function is as follows. DNA ligase that catalyzes the formation of phosphodiester linkages between 5'-phosphoryl and 3'-hydroxyl groups in double-stranded DNA using NAD as a coenzyme and as the energy source for the reaction. It is essential for DNA replication and repair of damaged DNA. The sequence is that of DNA ligase from Mycoplasma mycoides subsp. mycoides SC (strain CCUG 32753 / NCTC 10114 / PG1).